A 98-amino-acid chain; its full sequence is Large ribosomal subunit protein bL28 (98 aa).

This sequence belongs to the bacterial ribosomal protein bL28 family.

In Thermus thermophilus (strain ATCC BAA-163 / DSM 7039 / HB27), this protein is Large ribosomal subunit protein bL28.